A 339-amino-acid polypeptide reads, in one-letter code: Heat-inducible transcription repressor HrcA (339 aa).

The protein belongs to the HrcA family.

In terms of biological role, negative regulator of class I heat shock genes (grpE-dnaK-dnaJ and groELS operons). Prevents heat-shock induction of these operons. In Paraburkholderia xenovorans (strain LB400), this protein is Heat-inducible transcription repressor HrcA.